The primary structure comprises 156 residues: MPRRREVPKREILPDPKYHNIELAKFVNVLMTRGKKSVAEQIIYGALNHLEKKTGKDPVEVFTQALSNIRPVVEVKSRRVGGANYQVPVEVRSIRRSALAMRWLRDAARKRSEKSMDLRLASELLEASENRGAAIKKREEVHRMAESNKAFSHFRF.

Belongs to the universal ribosomal protein uS7 family. As to quaternary structure, part of the 30S ribosomal subunit. Contacts proteins S9 and S11.

In terms of biological role, one of the primary rRNA binding proteins, it binds directly to 16S rRNA where it nucleates assembly of the head domain of the 30S subunit. Is located at the subunit interface close to the decoding center, probably blocks exit of the E-site tRNA. The chain is Small ribosomal subunit protein uS7 from Nitrosomonas europaea (strain ATCC 19718 / CIP 103999 / KCTC 2705 / NBRC 14298).